Here is a 244-residue protein sequence, read N- to C-terminus: E3 ubiquitin-protein ligase RNF166 (244 aa).

The disordered stretch occupies residues 10–30 (AQRPQAPGPGPPRPPPPAGPA). Residues 15–28 (APGPGPPRPPPPAG) are compositionally biased toward pro residues. The RING-type zinc finger occupies 40–80 (CPICLEVFHRAVGIAGCGHTFCGECLQPCLQVPSPLCPLCR). Positions 105, 108, 120, and 124 each coordinate Zn(2+). The segment at 105–124 (CRGCSKKVTLAKMRSHVSSC) adopts a C2HC RNF-type zinc-finger fold. One can recognise a UIM domain in the interval 228–244 (DEEAALQAALALSLSEN).

The protein localises to the cytoplasm. The catalysed reaction is S-ubiquitinyl-[E2 ubiquitin-conjugating enzyme]-L-cysteine + [acceptor protein]-L-lysine = [E2 ubiquitin-conjugating enzyme]-L-cysteine + N(6)-ubiquitinyl-[acceptor protein]-L-lysine.. The protein operates within protein modification; protein ubiquitination. E3 ubiquitin-protein ligase that promotes the ubiquitination of different substrates. The protein is E3 ubiquitin-protein ligase RNF166 (RNF166) of Gallus gallus (Chicken).